A 261-amino-acid polypeptide reads, in one-letter code: Kallikrein 1-related peptidase b26 (261 aa).

A signal peptide spans 1–18 (MWFLILFPALSLGGIDAA). A propeptide spans 19 to 24 (PPLQSR) (activation peptide). The Peptidase S1 domain maps to 25–258 (VVGGFNCEKN…FNSWIKDTMM (234 aa)). Disulfide bonds link C31–C173, C50–C66, C152–C219, C184–C198, and C209–C234. H65 acts as the Charge relay system in catalysis. N-linked (GlcNAc...) asparagine glycosylation is present at N102. Residue D120 is the Charge relay system of the active site. S213 functions as the Charge relay system in the catalytic mechanism.

This sequence belongs to the peptidase S1 family. Kallikrein subfamily.

The catalysed reaction is Preferential cleavage of Arg-|-Xaa bonds in small molecule substrates. Highly selective action to release kallidin (lysyl-bradykinin) from kininogen involves hydrolysis of Met-|-Xaa or Leu-|-Xaa.. Glandular kallikreins cleave Met-Lys and Arg-Ser bonds in kininogen to release Lys-bradykinin. Its function is as follows. Prorenin-converting enzyme cleaves mouse REN-2 prorenin at a dibasic site to yield mature renin. The polypeptide is Kallikrein 1-related peptidase b26 (Klk1b26) (Mus musculus (Mouse)).